We begin with the raw amino-acid sequence, 430 residues long: Serine--tRNA ligase (430 aa).

L-serine is bound at residue 237–239 (TAE). Residue 268-270 (RSE) participates in ATP binding. An L-serine-binding site is contributed by Glu-291. 355-358 (EISS) serves as a coordination point for ATP. Residue Ser-391 coordinates L-serine.

The protein belongs to the class-II aminoacyl-tRNA synthetase family. Type-1 seryl-tRNA synthetase subfamily. In terms of assembly, homodimer. The tRNA molecule binds across the dimer.

It localises to the cytoplasm. It carries out the reaction tRNA(Ser) + L-serine + ATP = L-seryl-tRNA(Ser) + AMP + diphosphate + H(+). It catalyses the reaction tRNA(Sec) + L-serine + ATP = L-seryl-tRNA(Sec) + AMP + diphosphate + H(+). It participates in aminoacyl-tRNA biosynthesis; selenocysteinyl-tRNA(Sec) biosynthesis; L-seryl-tRNA(Sec) from L-serine and tRNA(Sec): step 1/1. Functionally, catalyzes the attachment of serine to tRNA(Ser). Is also able to aminoacylate tRNA(Sec) with serine, to form the misacylated tRNA L-seryl-tRNA(Sec), which will be further converted into selenocysteinyl-tRNA(Sec). The polypeptide is Serine--tRNA ligase (Citrobacter koseri (strain ATCC BAA-895 / CDC 4225-83 / SGSC4696)).